We begin with the raw amino-acid sequence, 129 residues long: Small ribosomal subunit protein uS11 (129 aa).

The protein belongs to the universal ribosomal protein uS11 family. As to quaternary structure, part of the 30S ribosomal subunit. Interacts with proteins S7 and S18. Binds to IF-3.

Located on the platform of the 30S subunit, it bridges several disparate RNA helices of the 16S rRNA. Forms part of the Shine-Dalgarno cleft in the 70S ribosome. The polypeptide is Small ribosomal subunit protein uS11 (Zymomonas mobilis subsp. mobilis (strain ATCC 31821 / ZM4 / CP4)).